The chain runs to 164 residues: B-phycoerythrin alpha chain (164 aa).

The (2R,3E)-phycoerythrobilin site is built by Cys-82 and Cys-139.

This sequence belongs to the phycobiliprotein family. Heteromer of 6 alpha, 6 beta and one gamma chain. Post-translationally, contains two covalently linked bilin chromophores.

It localises to the plastid. It is found in the chloroplast thylakoid membrane. Its function is as follows. Light-harvesting photosynthetic bile pigment-protein from the phycobiliprotein complex. The protein is B-phycoerythrin alpha chain (cpeA) of Rhodella violacea (Red alga).